A 435-amino-acid polypeptide reads, in one-letter code: Cell adhesion molecule 2 (435 aa).

Residues 1–24 form the signal peptide; the sequence is MIWKRSAVLRFYSVCGLLLLGSQG. Residues 25 to 367 lie on the Extracellular side of the membrane; the sequence is QFPLTQNVTV…SLAGQNGPDH (343 aa). Positions 27–119 constitute an Ig-like V-type domain; that stretch reads PLTQNVTVVE…PVKTSKAYLT (93 aa). N31 and N51 each carry an N-linked (GlcNAc...) asparagine glycan. 3 disulfide bridges follow: C44–C104, C146–C203, and C248–C296. 2 consecutive Ig-like C2-type domains span residues 127–219 and 227–312; these read PQIS…VAMQ and PSVK…YVLI. The N-linked (GlcNAc...) asparagine glycan is linked to N291. Positions 341–351 are enriched in low complexity; sequence TTSPSTSASSS. The interval 341–360 is disordered; sequence TTSPSTSASSSSRRDPNSLA. Residues 368–388 form a helical membrane-spanning segment; the sequence is ALIGGIVAVVVFVTLCSIFLL. The Cytoplasmic portion of the chain corresponds to 389–435; it reads GRYLARHKGTYLTNEAKGAEDAPDADTAIINAEGSQVNAEEKKEYFI. S423 is subject to Phosphoserine.

Belongs to the nectin family. Post-translationally, glycosylation at Asn-51 reduces adhesive binding.

It localises to the cell membrane. It is found in the synapse. The protein resides in the cell projection. The protein localises to the axon. Its function is as follows. Adhesion molecule that engages in homo- and heterophilic interactions with the other nectin-like family members, leading to cell aggregation. Important for synapse organization, providing regulated trans-synaptic adhesion. Preferentially binds to oligodendrocytes. The protein is Cell adhesion molecule 2 (Cadm2) of Rattus norvegicus (Rat).